Here is a 148-residue protein sequence, read N- to C-terminus: Deoxyuridine 5'-triphosphate nucleotidohydrolase (148 aa).

Residues 67-69 (RSG), N80, 84-86 (TID), and K94 each bind substrate.

It belongs to the dUTPase family. Mg(2+) serves as cofactor.

The enzyme catalyses dUTP + H2O = dUMP + diphosphate + H(+). The protein operates within pyrimidine metabolism; dUMP biosynthesis; dUMP from dCTP (dUTP route): step 2/2. Functionally, this enzyme is involved in nucleotide metabolism: it produces dUMP, the immediate precursor of thymidine nucleotides and it decreases the intracellular concentration of dUTP so that uracil cannot be incorporated into DNA. In Orientia tsutsugamushi (strain Ikeda) (Rickettsia tsutsugamushi), this protein is Deoxyuridine 5'-triphosphate nucleotidohydrolase.